A 1244-amino-acid chain; its full sequence is ATP-dependent RNA helicase DHX8 (1244 aa).

Lysine 140 participates in a covalent cross-link: Glycyl lysine isopeptide (Lys-Gly) (interchain with G-Cter in SUMO2). Disordered regions lie at residues 152-289 (LMPS…PAIG) and 361-396 (DVDQ…RPTH). Residues 160–169 (EKQRDPEHRD) are compositionally biased toward basic and acidic residues. Residues 170–179 (RTKKKKRSRS) are compositionally biased toward basic residues. The segment covering 180-220 (RDRDRDRDRDRDRDRDRDRDRDKDRERDRDRERDRERDRER) has biased composition (basic and acidic residues). Over residues 221–234 (DHKRRHRSRSRSHS) the composition is skewed to basic residues. Residues 256-283 (FKDRKDREKYGERNLDRWRDKHVDRPPP) are compositionally biased toward basic and acidic residues. Positions 289 to 360 (GDIYNGKVTS…TGTKTSLSMK (72 aa)) constitute an S1 motif domain. Residues 386-395 (TSMRNPDRPT) show a composition bias toward basic and acidic residues. Serine 419 carries the phosphoserine modification. Lysine 423 is covalently cross-linked (Glycyl lysine isopeptide (Lys-Gly) (interchain with G-Cter in SUMO2)). Serine 484 is modified (phosphoserine). The region spanning 599 to 762 (VQAVHDNQIL…FYEAPIFTIP (164 aa)) is the Helicase ATP-binding domain. 612–619 (GETGSGKT) is an ATP binding site. Positions 709-712 (DEAH) match the DEAH box motif. The Helicase C-terminal domain occupies 780–960 (YLDASLITVM…STVLSLKAMG (181 aa)).

The protein belongs to the DEAD box helicase family. DEAH subfamily. DDX8/PRP22 sub-subfamily. In terms of assembly, identified in the spliceosome C complex. Interacts with ARRB2; the interaction is detected in the nucleus upon OR1D2 stimulation. Interacts with SRRM2. Interacts with CACTIN.

The protein resides in the nucleus. It carries out the reaction ATP + H2O = ADP + phosphate + H(+). In terms of biological role, involved in pre-mRNA splicing as component of the spliceosome. Facilitates nuclear export of spliced mRNA by releasing the RNA from the spliceosome. In Mus musculus (Mouse), this protein is ATP-dependent RNA helicase DHX8 (Dhx8).